The primary structure comprises 196 residues: Orotate phosphoribosyltransferase (196 aa).

Residue 117–125 (EDIVTTGLS) coordinates 5-phospho-alpha-D-ribose 1-diphosphate. The orotate site is built by threonine 121 and arginine 149.

Belongs to the purine/pyrimidine phosphoribosyltransferase family. PyrE subfamily. Homodimer. Mg(2+) serves as cofactor.

The enzyme catalyses orotidine 5'-phosphate + diphosphate = orotate + 5-phospho-alpha-D-ribose 1-diphosphate. It functions in the pathway pyrimidine metabolism; UMP biosynthesis via de novo pathway; UMP from orotate: step 1/2. Its function is as follows. Catalyzes the transfer of a ribosyl phosphate group from 5-phosphoribose 1-diphosphate to orotate, leading to the formation of orotidine monophosphate (OMP). This chain is Orotate phosphoribosyltransferase, found in Methylobacterium sp. (strain 4-46).